The sequence spans 217 residues: Small ribosomal subunit protein uS3 (217 aa).

The region spanning 38–106 (IRKYIDNALQ…KVHINVIEIK (69 aa)) is the KH type-2 domain.

Belongs to the universal ribosomal protein uS3 family. In terms of assembly, part of the 30S ribosomal subunit. Forms a tight complex with proteins S10 and S14.

Functionally, binds the lower part of the 30S subunit head. Binds mRNA in the 70S ribosome, positioning it for translation. The polypeptide is Small ribosomal subunit protein uS3 (Staphylococcus saprophyticus subsp. saprophyticus (strain ATCC 15305 / DSM 20229 / NCIMB 8711 / NCTC 7292 / S-41)).